The chain runs to 144 residues: Large ribosomal subunit protein uL13 (144 aa).

Belongs to the universal ribosomal protein uL13 family. Part of the 50S ribosomal subunit.

In terms of biological role, this protein is one of the early assembly proteins of the 50S ribosomal subunit, although it is not seen to bind rRNA by itself. It is important during the early stages of 50S assembly. The protein is Large ribosomal subunit protein uL13 of Mycoplasma mobile (strain ATCC 43663 / 163K / NCTC 11711) (Mesomycoplasma mobile).